Consider the following 586-residue polypeptide: Zinc finger protein Eos (586 aa).

Disordered stretches follow at residues 1–42 (MHTP…APDF) and 68–98 (EKEF…SANS). Residues 25–34 (QGKDNLEREL) are compositionally biased toward basic and acidic residues. The segment covering 79-98 (SVSTPNSQHSSPSRSLSANS) has biased composition (polar residues). Lysine 100 participates in a covalent cross-link: Glycyl lysine isopeptide (Lys-Gly) (interchain with G-Cter in SUMO2). Phosphoserine is present on serine 105. 4 C2H2-type zinc fingers span residues 159–181 (LKCD…KRSH), 187–209 (FHCN…IKLH), 215–237 (FKCP…LRTH), and 248–271 (YKCN…ERCH). Positions 281–586 (AQALTGQPGD…HIVRGEHKVG (306 aa)) are interaction with FOXP3. Lysine 335 bears the N6-acetyllysine mark. The disordered stretch occupies residues 413 to 490 (RLELPGSREA…QPPPTIVVGR (78 aa)). The short motif at 423-433 (GEGPEDLGDGG) is the CTBP-binding motif PEDLG element. The span at 476–485 (QGPPPQPPPT) shows a compositional bias: pro residues. Lysine 501 participates in a covalent cross-link: Glycyl lysine isopeptide (Lys-Gly) (interchain with G-Cter in SUMO2). 2 C2H2-type zinc fingers span residues 531–553 (FKCE…MGCH) and 559–583 (FECN…RGEH).

Belongs to the Ikaros C2H2-type zinc-finger protein family. Self-associates. Interacts with other family members; IKZF1, IKZF2, IKZF3 and IKZF5. Interacts with CTBP2, SPI1 and MITF. Interacts with FOXP3 and CTBP1. Expressed mainly in the brain. Up-regulated in long term cultured astrocytes. Down-regulated during osteoclast differentiation.

It is found in the nucleus. Its function is as follows. DNA-binding protein that binds to the 5'GGGAATRCC-3' Ikaros-binding sequence. Interacts with SPI1 and MITF to repress transcription of the CTSK and ACP5 promoters via recruitment of corepressors SIN3A and CTBP2. May be involved in the development of central and peripheral nervous systems. Essential for the inhibitory function of regulatory T-cells (Treg). Mediates FOXP3-mediated gene silencing in regulatory T-cells (Treg) via recruitment of corepressor CTBP1. The polypeptide is Zinc finger protein Eos (Ikzf4) (Mus musculus (Mouse)).